A 313-amino-acid polypeptide reads, in one-letter code: MNTFSQVWVFSDTPSRLPELMNGAQALANQINAFVLNDADGAQAIQLGANHVWKLNGKPDDRMIEDYAGVMADTIRQHGADGLVLLPNTRRGKLLAAKLGYRLKAAVSNDASTVSVQDGKATVKHMVYGGLAIGEERIATPYAVLTISSGTFDAAQPDASRTGETHTVEWQAPAVAITRTATQARQSNSVDLDKARLVVSVGRGIGSKDNIALAEQLCKAIGAELACSRPVAENEKWMEHERYVGISNLMLKPELYLAVGISGQIQHMVGANASQTIFAINKDKNAPIFQYADYGIVGDAVKILPALTAALAR.

255–283 (LYLAVGISGQIQHMVGANASQTIFAINKD) lines the FAD pocket.

Belongs to the ETF alpha-subunit/FixB family. Heterodimer of FixA and FixB.

It functions in the pathway amine and polyamine metabolism; carnitine metabolism. Its function is as follows. Required for anaerobic carnitine reduction. May bring reductant to CaiA. This is Protein FixB from Escherichia coli O17:K52:H18 (strain UMN026 / ExPEC).